Reading from the N-terminus, the 242-residue chain is Probable transcriptional regulatory protein BURPS1710b_1385 (242 aa).

It belongs to the TACO1 family.

The protein resides in the cytoplasm. In Burkholderia pseudomallei (strain 1710b), this protein is Probable transcriptional regulatory protein BURPS1710b_1385.